A 423-amino-acid polypeptide reads, in one-letter code: Adenylosuccinate synthetase (423 aa).

GTP contacts are provided by residues 12–18 and 40–42; these read GDEGKGK and GHT. D13 acts as the Proton acceptor in catalysis. Mg(2+) contacts are provided by D13 and G40. IMP is bound by residues 13–16, 38–41, T128, R142, Q223, T238, and R302; these read DEGK and NAGH. H41 serves as the catalytic Proton donor. 298 to 304 serves as a coordination point for substrate; sequence TTTGRPR. GTP-binding positions include R304, 330 to 332, and 412 to 414; these read RLD and CIG.

It belongs to the adenylosuccinate synthetase family. Homodimer. Mg(2+) is required as a cofactor.

The protein localises to the cytoplasm. The enzyme catalyses IMP + L-aspartate + GTP = N(6)-(1,2-dicarboxyethyl)-AMP + GDP + phosphate + 2 H(+). Its pathway is purine metabolism; AMP biosynthesis via de novo pathway; AMP from IMP: step 1/2. Plays an important role in the de novo pathway of purine nucleotide biosynthesis. Catalyzes the first committed step in the biosynthesis of AMP from IMP. This Dehalococcoides mccartyi (strain ATCC BAA-2100 / JCM 16839 / KCTC 5957 / BAV1) protein is Adenylosuccinate synthetase.